Reading from the N-terminus, the 173-residue chain is Ribosome maturation factor RimP (173 aa).

Belongs to the RimP family.

The protein localises to the cytoplasm. Functionally, required for maturation of 30S ribosomal subunits. This is Ribosome maturation factor RimP from Chlorobaculum tepidum (strain ATCC 49652 / DSM 12025 / NBRC 103806 / TLS) (Chlorobium tepidum).